The following is a 47-amino-acid chain: Fasciclin-like arabinogalactan protein (47 aa).

The 47-residue stretch at 1–47 (APTPATLNGLTIFAPNDEAFKATGVPDLSKLSNAPMVSLLQYHAAAR) folds into the FAS1 domain.

This sequence belongs to the fasciclin-like AGP family.

In terms of biological role, may be a cell surface adhesion protein. This Jatropha curcas (Barbados nut) protein is Fasciclin-like arabinogalactan protein.